Here is a 558-residue protein sequence, read N- to C-terminus: Eukaryotic translation initiation factor 3 subunit D (558 aa).

Positions 296–310 are RNA gate; the sequence is EFDLLTVNETSVEPP. Positions 534 to 558 are disordered; it reads DNTFESEGEEEDSDEEEQVKDAFQR. Acidic residues predominate over residues 537 to 551; it reads FESEGEEEDSDEEEQ.

Belongs to the eIF-3 subunit D family. As to quaternary structure, component of the eukaryotic translation initiation factor 3 (eIF-3) complex.

The protein localises to the cytoplasm. Its function is as follows. mRNA cap-binding component of the eukaryotic translation initiation factor 3 (eIF-3) complex, which is involved in protein synthesis of a specialized repertoire of mRNAs and, together with other initiation factors, stimulates binding of mRNA and methionyl-tRNAi to the 40S ribosome. The eIF-3 complex specifically targets and initiates translation of a subset of mRNAs involved in cell proliferation. In the eIF-3 complex, eif3d specifically recognizes and binds the 7-methylguanosine cap of a subset of mRNAs. The sequence is that of Eukaryotic translation initiation factor 3 subunit D from Nasonia vitripennis (Parasitic wasp).